We begin with the raw amino-acid sequence, 242 residues long: Galectin-3 (242 aa).

A disordered region spans residues 1-35; sequence MADGFSLNDALSGSGHPPNQGWPGPWGNQPAGPGG. The residue at position 2 (Ala2) is an N-acetylalanine. Phosphoserine; by CK1 is present on Ser6. Ser12 carries the post-translational modification Phosphoserine. The segment covering 17-31 has biased composition (low complexity); that stretch reads PPNQGWPGPWGNQPA. 4 consecutive repeat copies span residues 35 to 43, 44 to 52, 53 to 61, and 62 to 70. Residues 35-98 form a 7 X 9 AA tandem repeats of Y-P-G-X(3)-P-[GS]-A region; the sequence is GYPGAAYPGA…GAGAYPGASP (64 aa). The segment at 55 to 93 is disordered; sequence GQAPPGPYPGPGAHGAYPGQPGGPGAYPSPGQPSGAGAY. A 5; approximate repeat occupies 71–80; it reads YPGQPGGPGA. Residues 80-93 show a composition bias toward low complexity; it reads AYPSPGQPSGAGAY. One copy of the 6; approximate repeat lies at 81-92; sequence YPSPGQPSGAGA. A 7; truncated repeat occupies 93–98; it reads YPGASP. One can recognise a Galectin domain in the interval 110 to 240; the sequence is YDLPLPGGVM…DIQLTSASHA (131 aa). An a beta-D-galactoside-binding site is contributed by 173–181; it reads WGREERQTT. Positions 218–233 match the Nuclear export signal motif; it reads RNLKEINKLGISGDIQ.

As to quaternary structure, probably forms homo- or heterodimers. Interacts with DMBT1. Interacts with CD6 and ALCAM. Forms a complex with the ITGA3, ITGB1 and CSPG4. Interacts with LGALS3BP, LYPD3, ZFTRAF1 and UACA. Interacts with TRIM16; this interaction mediates autophagy of damage endomembranes. Interacts with cargo receptor TMED10; the interaction mediates the translocation from the cytoplasm into the ERGIC (endoplasmic reticulum-Golgi intermediate compartment) and thereby secretion. Interacts with and inhibits by binding NCR3/NKp30.

The protein resides in the cytoplasm. Its subcellular location is the nucleus. It localises to the secreted. Functionally, galactose-specific lectin which binds IgE. May mediate with the alpha-3, beta-1 integrin the stimulation by CSPG4 of endothelial cells migration. Together with DMBT1, required for terminal differentiation of columnar epithelial cells during early embryogenesis. In the nucleus: acts as a pre-mRNA splicing factor. Involved in acute inflammatory responses including neutrophil activation and adhesion, chemoattraction of monocytes macrophages, opsonization of apoptotic neutrophils, and activation of mast cells. Together with TRIM16, coordinates the recognition of membrane damage with mobilization of the core autophagy regulators ATG16L1 and BECN1 in response to damaged endomembranes. When secreted, interacts with NK cell-activating receptor NCR3/NKp30 acting as an inhibitory ligand which antagonizes NK cell attack. The polypeptide is Galectin-3 (LGALS3) (Oryctolagus cuniculus (Rabbit)).